The sequence spans 443 residues: tRNA-2-methylthio-N(6)-dimethylallyladenosine synthase (443 aa).

Residues 1–114 (MRFYIKTFGC…VTEAVKRALQ (114 aa)) form the MTTase N-terminal domain. [4Fe-4S] cluster is bound by residues C10, C46, C79, C150, C154, and C157. One can recognise a Radical SAM core domain in the interval 136 to 367 (RSSKHHAWVT…MNLQKRINRK (232 aa)). Residues 370–431 (ERYKGKTVRV…AGPLYGKVVW (62 aa)) form the TRAM domain.

It belongs to the methylthiotransferase family. MiaB subfamily. Monomer. [4Fe-4S] cluster serves as cofactor.

Its subcellular location is the cytoplasm. It catalyses the reaction N(6)-dimethylallyladenosine(37) in tRNA + (sulfur carrier)-SH + AH2 + 2 S-adenosyl-L-methionine = 2-methylsulfanyl-N(6)-dimethylallyladenosine(37) in tRNA + (sulfur carrier)-H + 5'-deoxyadenosine + L-methionine + A + S-adenosyl-L-homocysteine + 2 H(+). Functionally, catalyzes the methylthiolation of N6-(dimethylallyl)adenosine (i(6)A), leading to the formation of 2-methylthio-N6-(dimethylallyl)adenosine (ms(2)i(6)A) at position 37 in tRNAs that read codons beginning with uridine. The polypeptide is tRNA-2-methylthio-N(6)-dimethylallyladenosine synthase (Thermotoga sp. (strain RQ2)).